The chain runs to 1070 residues: Carbamoyl phosphate synthase large chain (1070 aa).

The carboxyphosphate synthetic domain stretch occupies residues 1-399; that stretch reads MPKREDIKKV…SLLKAFKSLD (399 aa). Positions 129, 169, 175, 176, 208, 210, 215, 241, 242, 243, 284, and 296 each coordinate ATP. The ATP-grasp 1 domain occupies 133–325; sequence KETMLRIGEK…IARVTAKIAI (193 aa). Mg(2+)-binding residues include Gln-284, Glu-296, and Asn-298. The Mn(2+) site is built by Gln-284, Glu-296, and Asn-298. Residues 400–540 form an oligomerization domain region; it reads IDSQLGNKRW…YSTYEDTCET (141 aa). The tract at residues 541-931 is carbamoyl phosphate synthetic domain; sequence NPTDRKKILI…YKAELAADNL (391 aa). The region spanning 672 to 863 is the ATP-grasp 2 domain; that stretch reads YVLMQKFGIL…LAKIAARVIA (192 aa). 10 residues coordinate ATP: Arg-708, Asp-747, Leu-749, Glu-754, Gly-779, Val-780, His-781, Ser-782, Gln-822, and Glu-834. The Mg(2+) site is built by Gln-822, Glu-834, and Asn-836. Residues Gln-822, Glu-834, and Asn-836 each coordinate Mn(2+). The MGS-like domain occupies 930-1070; it reads NLLPLTGKVF…INEYHKEMGL (141 aa). The allosteric domain stretch occupies residues 932–1070; that stretch reads LPLTGKVFLS…INEYHKEMGL (139 aa).

This sequence belongs to the CarB family. Composed of two chains; the small (or glutamine) chain promotes the hydrolysis of glutamine to ammonia, which is used by the large (or ammonia) chain to synthesize carbamoyl phosphate. Tetramer of heterodimers (alpha,beta)4. It depends on Mg(2+) as a cofactor. Mn(2+) is required as a cofactor.

It catalyses the reaction hydrogencarbonate + L-glutamine + 2 ATP + H2O = carbamoyl phosphate + L-glutamate + 2 ADP + phosphate + 2 H(+). The enzyme catalyses hydrogencarbonate + NH4(+) + 2 ATP = carbamoyl phosphate + 2 ADP + phosphate + 2 H(+). It participates in amino-acid biosynthesis; L-arginine biosynthesis; carbamoyl phosphate from bicarbonate: step 1/1. Its pathway is pyrimidine metabolism; UMP biosynthesis via de novo pathway; (S)-dihydroorotate from bicarbonate: step 1/3. Functionally, large subunit of the glutamine-dependent carbamoyl phosphate synthetase (CPSase). CPSase catalyzes the formation of carbamoyl phosphate from the ammonia moiety of glutamine, carbonate, and phosphate donated by ATP, constituting the first step of 2 biosynthetic pathways, one leading to arginine and/or urea and the other to pyrimidine nucleotides. The large subunit (synthetase) binds the substrates ammonia (free or transferred from glutamine from the small subunit), hydrogencarbonate and ATP and carries out an ATP-coupled ligase reaction, activating hydrogencarbonate by forming carboxy phosphate which reacts with ammonia to form carbamoyl phosphate. The sequence is that of Carbamoyl phosphate synthase large chain from Methanosarcina acetivorans (strain ATCC 35395 / DSM 2834 / JCM 12185 / C2A).